Consider the following 420-residue polypeptide: 3-isopropylmalate dehydratase large subunit (420 aa).

The [4Fe-4S] cluster site is built by Cys-300, Cys-360, and Cys-363.

This sequence belongs to the aconitase/IPM isomerase family. LeuC type 2 subfamily. As to quaternary structure, heterodimer of LeuC and LeuD. [4Fe-4S] cluster serves as cofactor.

The catalysed reaction is (2R,3S)-3-isopropylmalate = (2S)-2-isopropylmalate. It functions in the pathway amino-acid biosynthesis; L-leucine biosynthesis; L-leucine from 3-methyl-2-oxobutanoate: step 2/4. Functionally, catalyzes the isomerization between 2-isopropylmalate and 3-isopropylmalate, via the formation of 2-isopropylmaleate. This is 3-isopropylmalate dehydratase large subunit from Clostridium kluyveri (strain ATCC 8527 / DSM 555 / NBRC 12016 / NCIMB 10680 / K1).